The sequence spans 682 residues: E3 ubiquitin ligase Rnf157 (682 aa).

The N-myristoyl glycine moiety is linked to residue Gly-2. An RING-type; degenerate zinc finger spans residues 277–317 (CVVCLSDVRDTLILPCRHCASCNVHCADTLRYQANNCPICR). Positions 330–333 (RKKL) match the D-box 1 motif. Disordered regions lie at residues 440 to 604 (QNSS…VQED) and 655 to 682 (NTQRRRLSPSSLEDPEEDRPCVWDPLAV). The segment covering 479–538 (ESENLTLSSSGAVDQSSCTGTPLSSTISSPEDPASSSLAQSVMSMASSQISTDTVSSMSG) has biased composition (polar residues). The segment covering 585–597 (QDAEGNDIMEEED) has biased composition (acidic residues). The D-box 2 signature appears at 658–661 (RRRL). Phosphoserine occurs at positions 662, 664, and 665.

In terms of assembly, interacts with APBB1. Interacts with CHD1; CHD1-binding controls RNF157 stability. Also interacts with ATRN, MEGF8, TECR, MSI2, PLRG1, BYSL, MTERF3, PSMA1, MRPS18B, PRPF4, FASTKD2, SLC25A1, SMU1, CNOT9, MRPS2, MAGT1, FXR2, EMD, PSMD8, HDAC1, RAN, HSD17B12, TXNDC5 and MRPL19. In terms of tissue distribution, predominantly expressed in the brain.

It is found in the cytoplasm. The catalysed reaction is S-ubiquitinyl-[E2 ubiquitin-conjugating enzyme]-L-cysteine + [acceptor protein]-L-lysine = [E2 ubiquitin-conjugating enzyme]-L-cysteine + N(6)-ubiquitinyl-[acceptor protein]-L-lysine.. In terms of biological role, E3 ubiquitin ligase that ubiquitinates APBB1 for its degradation by the proteasome and thus prevents apoptosis and promotes survival of neurons. Has a dual role in neurons as it is also required for dendrite growth and maintenance for which its ligase activity is not critical. May act as a scaffold molecule to regulate this process. Acts as a downstream effector of the interconnected PI3K and MAPK signaling pathways and thus participates in the regulation of the cell cycle. This Rattus norvegicus (Rat) protein is E3 ubiquitin ligase Rnf157 (Rnf157).